The following is a 228-amino-acid chain: Phosphoglycolate phosphatase 1 (228 aa).

Asp8 acts as the Nucleophile in catalysis. Asp8 and Asp10 together coordinate Mg(2+). Residue Lys149 coordinates substrate. Mg(2+)-binding residues include Asp172 and Asp176.

It belongs to the archaeal SPP-like hydrolase family. It depends on Mg(2+) as a cofactor.

The catalysed reaction is 2-phosphoglycolate + H2O = glycolate + phosphate. Functionally, catalyzes the dephosphorylation of 2-phosphoglycolate. The protein is Phosphoglycolate phosphatase 1 of Saccharolobus solfataricus (strain ATCC 35092 / DSM 1617 / JCM 11322 / P2) (Sulfolobus solfataricus).